We begin with the raw amino-acid sequence, 561 residues long: Terpene synthase 3 (561 aa).

Residues Asp315, Asp319, Asp458, and Glu466 each contribute to the Mg(2+) site. The DDXXD motif motif lies at 315–319 (DDVYD).

It belongs to the terpene synthase family. Tpsa subfamily. Mg(2+) is required as a cofactor. Mn(2+) serves as cofactor. As to expression, mostly expressed in stems amd leaves, and, to a lower extent, in roots and fruits.

It catalyses the reaction (2E,6E)-farnesyl diphosphate = germacrene D + diphosphate. It carries out the reaction (2E,6E)-farnesyl diphosphate = alpha-copaene + diphosphate. It participates in secondary metabolite biosynthesis; terpenoid biosynthesis. Functionally, sesquiterpene synthase involved in the biosynthesis of volatile compounds that contribute to the characteristic flavors of black pepper. Mediates the conversion of (2E,6E)-farnesyl diphosphate (FPP) into alpha-copaene and germacrene D. This chain is Terpene synthase 3, found in Piper nigrum (Black pepper).